A 720-amino-acid chain; its full sequence is ATP-dependent DNA helicase Hel308 (720 aa).

Residues S23, Q28, and 46–53 contribute to the ATP site; that span reads IPTASGKT. In terms of domain architecture, Helicase ATP-binding spans 33 to 197; it reads KSGILEGKNA…WLNAELIVSD (165 aa). Residues 145-148 carry the DEAH box motif; the sequence is DEIH. In terms of domain architecture, Helicase C-terminal spans 229–422; sequence LVYDAIRKKK…NLRSQVLALI (194 aa).

It belongs to the helicase family. Hel308 subfamily. As to quaternary structure, monomer. Interacts with PCNA. Requires Mg(2+) as cofactor. Zn(2+) serves as cofactor.

It carries out the reaction Couples ATP hydrolysis with the unwinding of duplex DNA by translocating in the 3'-5' direction.. The catalysed reaction is ATP + H2O = ADP + phosphate + H(+). In terms of biological role, DNA-dependent ATPase and 3'-5' DNA helicase that may be involved in repair of stalled replication forks. Unwinds the lagging strand from forked DNA structures in a 3'-5' direction. PCNA, the DNA polymerase sliding clamp subunit, stimulates the helicase activity, and may alter substrate specificity. Unwinds branched DNA (Holliday junctions) in an ATP-dependent fashion; ss- and dsDNA stimulate ATPase to the greatest extent, although it preferentially binds DNA with a single-stranded region. Processes a RecA-mediated recombination intermediate between gapped circular and homologous linear dsDNA. This is ATP-dependent DNA helicase Hel308 from Pyrococcus furiosus (strain ATCC 43587 / DSM 3638 / JCM 8422 / Vc1).